A 338-amino-acid chain; its full sequence is Glycerol-3-phosphate dehydrogenase [NAD(P)+] (338 aa).

Positions 18, 19, 39, and 113 each coordinate NADPH. Lysine 113, glycine 142, and threonine 144 together coordinate sn-glycerol 3-phosphate. Alanine 146 serves as a coordination point for NADPH. Sn-glycerol 3-phosphate-binding residues include lysine 198, aspartate 251, serine 261, arginine 262, and asparagine 263. The active-site Proton acceptor is the lysine 198. Residue arginine 262 participates in NADPH binding. Positions 286 and 288 each coordinate NADPH.

The protein belongs to the NAD-dependent glycerol-3-phosphate dehydrogenase family.

It localises to the cytoplasm. It catalyses the reaction sn-glycerol 3-phosphate + NAD(+) = dihydroxyacetone phosphate + NADH + H(+). The catalysed reaction is sn-glycerol 3-phosphate + NADP(+) = dihydroxyacetone phosphate + NADPH + H(+). It participates in membrane lipid metabolism; glycerophospholipid metabolism. In terms of biological role, catalyzes the reduction of the glycolytic intermediate dihydroxyacetone phosphate (DHAP) to sn-glycerol 3-phosphate (G3P), the key precursor for phospholipid synthesis. The sequence is that of Glycerol-3-phosphate dehydrogenase [NAD(P)+] from Photobacterium profundum (strain SS9).